A 1384-amino-acid chain; its full sequence is ATP-dependent RNA helicase TDRD9 (1384 aa).

The disordered stretch occupies residues 35–60; it reads EAPREEVQRSEEVPSEAPTAQAQDPV. Residues 36-46 are compositionally biased toward basic and acidic residues; it reads APREEVQRSEE. The Helicase ATP-binding domain occupies 144–310; the sequence is ISLIESNSVV…FAVPVQNKMN (167 aa). 157–164 lines the ATP pocket; sequence GATGSGKS. The DEAH box signature appears at 256–259; that stretch reads DEVH. In terms of domain architecture, Helicase C-terminal spans 379-546; the sequence is SGAQFVSERS…VLKVKLLDMG (168 aa). Residues 946–1006 enclose the Tudor domain; it reads HPHPDLVCLA…REIPCQLLEL (61 aa).

This sequence belongs to the DEAD box helicase family. DEAH subfamily. In terms of assembly, interacts with piRNA-associated proteins PIWIL1 and PIWIL4.

The protein resides in the cytoplasm. It localises to the nucleus. The enzyme catalyses ATP + H2O = ADP + phosphate + H(+). Its function is as follows. ATP-binding RNA helicase which plays a central role during spermatogenesis by repressing transposable elements and preventing their mobilization, which is essential for the germline integrity. Acts via the piRNA metabolic process, which mediates the repression of transposable elements during meiosis by forming complexes composed of piRNAs and Piwi proteins and governs the methylation and subsequent repression of transposons. Acts downstream of piRNA biogenesis: exclusively required for transposon silencing in the nucleus, suggesting that it acts as a nuclear effector in the nucleus together with PIWIL4. The sequence is that of ATP-dependent RNA helicase TDRD9 from Rattus norvegicus (Rat).